The following is a 257-amino-acid chain: Deoxyribose-phosphate aldolase (257 aa).

Asp-102 functions as the Proton donor/acceptor in the catalytic mechanism. The active-site Schiff-base intermediate with acetaldehyde is Lys-166. The active-site Proton donor/acceptor is the Lys-198.

This sequence belongs to the DeoC/FbaB aldolase family. DeoC type 2 subfamily.

It is found in the cytoplasm. It catalyses the reaction 2-deoxy-D-ribose 5-phosphate = D-glyceraldehyde 3-phosphate + acetaldehyde. Its pathway is carbohydrate degradation; 2-deoxy-D-ribose 1-phosphate degradation; D-glyceraldehyde 3-phosphate and acetaldehyde from 2-deoxy-alpha-D-ribose 1-phosphate: step 2/2. Catalyzes a reversible aldol reaction between acetaldehyde and D-glyceraldehyde 3-phosphate to generate 2-deoxy-D-ribose 5-phosphate. The polypeptide is Deoxyribose-phosphate aldolase (Aeromonas hydrophila subsp. hydrophila (strain ATCC 7966 / DSM 30187 / BCRC 13018 / CCUG 14551 / JCM 1027 / KCTC 2358 / NCIMB 9240 / NCTC 8049)).